Here is a 447-residue protein sequence, read N- to C-terminus: Tyrosine aminotransferase (447 aa).

Lysine 273 carries the post-translational modification N6-(pyridoxal phosphate)lysine. Serine 441 carries the phosphoserine modification.

The protein belongs to the class-I pyridoxal-phosphate-dependent aminotransferase family. In terms of assembly, homodimer. Requires pyridoxal 5'-phosphate as cofactor.

It catalyses the reaction L-tyrosine + 2-oxoglutarate = 3-(4-hydroxyphenyl)pyruvate + L-glutamate. The protein operates within amino-acid degradation; L-phenylalanine degradation; acetoacetate and fumarate from L-phenylalanine: step 2/6. In terms of biological role, transaminase involved in tyrosine breakdown. Converts tyrosine to p-hydroxyphenylpyruvate. Can catalyze the reverse reaction, using glutamic acid, with 2-oxoglutarate as cosubstrate (in vitro). Has much lower affinity and transaminase activity for phenylalanine. The sequence is that of Tyrosine aminotransferase (TAT) from Bos taurus (Bovine).